A 213-amino-acid chain; its full sequence is High frequency lysogenization protein HflD homolog (213 aa).

Belongs to the HflD family.

Its subcellular location is the cytoplasm. It is found in the cell inner membrane. The polypeptide is High frequency lysogenization protein HflD homolog (Alcanivorax borkumensis (strain ATCC 700651 / DSM 11573 / NCIMB 13689 / SK2)).